The following is a 273-amino-acid chain: Shikimate dehydrogenase (NADP(+)) (273 aa).

Residues 18–20 (SKS) and T65 contribute to the shikimate site. K69 acts as the Proton acceptor in catalysis. Position 81 (E81) interacts with NADP(+). Shikimate-binding residues include N90 and D105. Residues 130 to 134 (GAGGA), 154 to 159 (NRTHSK), and M217 each bind NADP(+). Y219 contacts shikimate. G240 provides a ligand contact to NADP(+).

Belongs to the shikimate dehydrogenase family. As to quaternary structure, homodimer.

The catalysed reaction is shikimate + NADP(+) = 3-dehydroshikimate + NADPH + H(+). It functions in the pathway metabolic intermediate biosynthesis; chorismate biosynthesis; chorismate from D-erythrose 4-phosphate and phosphoenolpyruvate: step 4/7. Its function is as follows. Involved in the biosynthesis of the chorismate, which leads to the biosynthesis of aromatic amino acids. Catalyzes the reversible NADPH linked reduction of 3-dehydroshikimate (DHSA) to yield shikimate (SA). The chain is Shikimate dehydrogenase (NADP(+)) from Herminiimonas arsenicoxydans.